The primary structure comprises 357 residues: Alanine racemase (357 aa).

The Proton acceptor; specific for D-alanine role is filled by lysine 34. Lysine 34 is modified (N6-(pyridoxal phosphate)lysine). Arginine 127 lines the substrate pocket. Tyrosine 252 (proton acceptor; specific for L-alanine) is an active-site residue. Methionine 301 lines the substrate pocket.

It belongs to the alanine racemase family. It depends on pyridoxal 5'-phosphate as a cofactor.

The enzyme catalyses L-alanine = D-alanine. It functions in the pathway amino-acid biosynthesis; D-alanine biosynthesis; D-alanine from L-alanine: step 1/1. Functionally, catalyzes the interconversion of L-alanine and D-alanine. May also act on other amino acids. This chain is Alanine racemase (alr), found in Dichelobacter nodosus (strain VCS1703A).